A 229-amino-acid chain; its full sequence is Ribose-5-phosphate isomerase A (229 aa).

Residues Thr-28–Thr-31, Asp-85–Asp-88, and Lys-98–Gly-101 each bind substrate. Glu-107 serves as the catalytic Proton acceptor. Lys-125 lines the substrate pocket.

This sequence belongs to the ribose 5-phosphate isomerase family. Homodimer.

It catalyses the reaction aldehydo-D-ribose 5-phosphate = D-ribulose 5-phosphate. The protein operates within carbohydrate degradation; pentose phosphate pathway; D-ribose 5-phosphate from D-ribulose 5-phosphate (non-oxidative stage): step 1/1. Functionally, catalyzes the reversible conversion of ribose-5-phosphate to ribulose 5-phosphate. The sequence is that of Ribose-5-phosphate isomerase A from Thermococcus kodakarensis (strain ATCC BAA-918 / JCM 12380 / KOD1) (Pyrococcus kodakaraensis (strain KOD1)).